Here is a 426-residue protein sequence, read N- to C-terminus: NADH-quinone oxidoreductase subunit D 1 (426 aa).

Positions 1–51 are disordered; the sequence is MATEFTVPDSAARIATAQQAGGGTPVRSGPPDEGGEFSGDRMSLSMGPSHP.

The protein belongs to the complex I 49 kDa subunit family. In terms of assembly, NDH-1 is composed of 14 different subunits. Subunits NuoB, C, D, E, F, and G constitute the peripheral sector of the complex.

It is found in the cell inner membrane. It catalyses the reaction a quinone + NADH + 5 H(+)(in) = a quinol + NAD(+) + 4 H(+)(out). Functionally, NDH-1 shuttles electrons from NADH, via FMN and iron-sulfur (Fe-S) centers, to quinones in the respiratory chain. The immediate electron acceptor for the enzyme in this species is believed to be ubiquinone. Couples the redox reaction to proton translocation (for every two electrons transferred, four hydrogen ions are translocated across the cytoplasmic membrane), and thus conserves the redox energy in a proton gradient. This is NADH-quinone oxidoreductase subunit D 1 from Opitutus terrae (strain DSM 11246 / JCM 15787 / PB90-1).